A 305-amino-acid chain; its full sequence is MSSVDEFLTYLQVERQVSAHTLDAYRRDLAALVVWASEQKTDDGVQDAAVPAETAQFDSAHLRQFVAAEHRRGLSAKSLQRRLSACRSYYAWLLKRGRISASPAAALRAPKAPRKLPQVLDADEAVRLVEVPTDAPLGLRDRALLEVFYSSGLRLSELCALRWRDLDLDSGLVMVLGKGSKQRLVPVGSHAIAALREWRRDSGASADSHVFPGRAGGAISQRAVQIRIKQLAVRQGMFKDVHPHMLRHSFASHILESSGDLRGVQELLGHSDIATTQIYTHLDFQHLAKVYDAAHPRARRKKAAE.

Residues 1–94 (MSSVDEFLTY…ACRSYYAWLL (94 aa)) enclose the Core-binding (CB) domain. In terms of domain architecture, Tyr recombinase spans 115–292 (KLPQVLDADE…DFQHLAKVYD (178 aa)). Catalysis depends on residues arginine 154, lysine 178, histidine 244, arginine 247, and histidine 270. Tyrosine 279 functions as the O-(3'-phospho-DNA)-tyrosine intermediate in the catalytic mechanism.

This sequence belongs to the 'phage' integrase family. XerC subfamily. Forms a cyclic heterotetrameric complex composed of two molecules of XerC and two molecules of XerD.

Its subcellular location is the cytoplasm. Site-specific tyrosine recombinase, which acts by catalyzing the cutting and rejoining of the recombining DNA molecules. The XerC-XerD complex is essential to convert dimers of the bacterial chromosome into monomers to permit their segregation at cell division. It also contributes to the segregational stability of plasmids. The protein is Tyrosine recombinase XerC of Xanthomonas axonopodis pv. citri (strain 306).